Reading from the N-terminus, the 37-residue chain is Antifungal protein 4 (37 aa).

The protein resides in the secreted. Possesses antifungal activity against P.infestans but not F.graminearum. The polypeptide is Antifungal protein 4 (Malva parviflora (Little mallow)).